A 176-amino-acid polypeptide reads, in one-letter code: Sarcoplasmic calcium-binding protein (176 aa).

Residue Thr-1 is modified to N-acetylthreonine. 4 consecutive EF-hand domains span residues 3–38, 55–90, 91–126, and 127–160; these read YLVSKWKIWYKSLDVNHDGIISIENVEESRNKFTDL, KWWDTYIFLTPGAEISETQFVENLGNSFKKDKAFLA, TMTACFNMIFDVIDTDKDRSIDLNEFIYAFAAFGHE, and NESVVRTAFALLKPDDDNTVPLRTVVDAWISFVT. Positions 16, 18, 20, and 27 each coordinate Ca(2+). 5 residues coordinate Ca(2+): Asp-104, Asp-106, Asp-108, Ser-110, and Glu-115.

In terms of biological role, like parvalbumins, SCPs seem to be more abundant in fast contracting muscles, but no functional relationship can be established from this distribution. The protein is Sarcoplasmic calcium-binding protein of Mizuhopecten yessoensis (Japanese scallop).